Consider the following 126-residue polypeptide: MAHVKRGVIARARHKKVLKQAKGYYGARSRTYRTARQAIIKAGQYSYRDRRQRKRYFRKLWITRINAAVRENQISYSKFMYGLKKASIAVDRKMLSELAIFDNVSFCSLIKSSKDALTSIELNKNL.

This sequence belongs to the bacterial ribosomal protein bL20 family.

In terms of biological role, binds directly to 23S ribosomal RNA and is necessary for the in vitro assembly process of the 50S ribosomal subunit. It is not involved in the protein synthesizing functions of that subunit. In Buchnera aphidicola subsp. Baizongia pistaciae (strain Bp), this protein is Large ribosomal subunit protein bL20.